A 288-amino-acid chain; its full sequence is Polyamine aminopropyltransferase (288 aa).

The PABS domain maps to 9 to 238; the sequence is ETLHDQFGQY…GIMTFAWATD (230 aa). Position 33 (glutamine 33) interacts with S-methyl-5'-thioadenosine. Positions 64 and 88 each coordinate spermidine. S-methyl-5'-thioadenosine contacts are provided by residues glutamate 108 and 140–141; that span reads DG. Residue aspartate 158 is the Proton acceptor of the active site. Spermidine is bound at residue 158–161; sequence DCTD. Residue proline 165 participates in S-methyl-5'-thioadenosine binding.

This sequence belongs to the spermidine/spermine synthase family. Homodimer or homotetramer.

Its subcellular location is the cytoplasm. The catalysed reaction is S-adenosyl 3-(methylsulfanyl)propylamine + putrescine = S-methyl-5'-thioadenosine + spermidine + H(+). The protein operates within amine and polyamine biosynthesis; spermidine biosynthesis; spermidine from putrescine: step 1/1. Catalyzes the irreversible transfer of a propylamine group from the amino donor S-adenosylmethioninamine (decarboxy-AdoMet) to putrescine (1,4-diaminobutane) to yield spermidine. In Shigella flexneri serotype 5b (strain 8401), this protein is Polyamine aminopropyltransferase.